The primary structure comprises 486 residues: Iron-sulfur cluster assembly SufBD family protein ycf24 (486 aa).

It belongs to the iron-sulfur cluster assembly SufBD family.

Its subcellular location is the plastid. It localises to the chloroplast. This Trieres chinensis (Marine centric diatom) protein is Iron-sulfur cluster assembly SufBD family protein ycf24 (ycf24).